We begin with the raw amino-acid sequence, 254 residues long: Imidazole glycerol phosphate synthase subunit HisF (254 aa).

Active-site residues include Asp-11 and Asp-130.

This sequence belongs to the HisA/HisF family. As to quaternary structure, heterodimer of HisH and HisF.

The protein resides in the cytoplasm. It carries out the reaction 5-[(5-phospho-1-deoxy-D-ribulos-1-ylimino)methylamino]-1-(5-phospho-beta-D-ribosyl)imidazole-4-carboxamide + L-glutamine = D-erythro-1-(imidazol-4-yl)glycerol 3-phosphate + 5-amino-1-(5-phospho-beta-D-ribosyl)imidazole-4-carboxamide + L-glutamate + H(+). Its pathway is amino-acid biosynthesis; L-histidine biosynthesis; L-histidine from 5-phospho-alpha-D-ribose 1-diphosphate: step 5/9. IGPS catalyzes the conversion of PRFAR and glutamine to IGP, AICAR and glutamate. The HisF subunit catalyzes the cyclization activity that produces IGP and AICAR from PRFAR using the ammonia provided by the HisH subunit. The sequence is that of Imidazole glycerol phosphate synthase subunit HisF from Acidiphilium cryptum (strain JF-5).